The sequence spans 208 residues: Large ribosomal subunit protein uL4 (208 aa).

The tract at residues 42 to 77 is disordered; the sequence is SMRQGTHKTKTKTEVSGGGRKPWRQKGTGRARQGSI.

Belongs to the universal ribosomal protein uL4 family. In terms of assembly, part of the 50S ribosomal subunit.

One of the primary rRNA binding proteins, this protein initially binds near the 5'-end of the 23S rRNA. It is important during the early stages of 50S assembly. It makes multiple contacts with different domains of the 23S rRNA in the assembled 50S subunit and ribosome. Functionally, forms part of the polypeptide exit tunnel. The sequence is that of Large ribosomal subunit protein uL4 from Spiroplasma kunkelii.